The primary structure comprises 239 residues: Probable methylthioribulose-1-phosphate dehydratase (239 aa).

Cysteine 100 serves as a coordination point for substrate. Zn(2+)-binding residues include histidine 118 and histidine 120. Glutamate 141 (proton donor/acceptor) is an active-site residue. A Zn(2+)-binding site is contributed by histidine 197.

This sequence belongs to the aldolase class II family. MtnB subfamily. Zn(2+) is required as a cofactor.

It is found in the cytoplasm. The enzyme catalyses 5-(methylsulfanyl)-D-ribulose 1-phosphate = 5-methylsulfanyl-2,3-dioxopentyl phosphate + H2O. The protein operates within amino-acid biosynthesis; L-methionine biosynthesis via salvage pathway; L-methionine from S-methyl-5-thio-alpha-D-ribose 1-phosphate: step 2/6. In terms of biological role, catalyzes the dehydration of methylthioribulose-1-phosphate (MTRu-1-P) into 2,3-diketo-5-methylthiopentyl-1-phosphate (DK-MTP-1-P). The chain is Probable methylthioribulose-1-phosphate dehydratase from Leishmania major.